The sequence spans 197 residues: MDDLSRFNQVCKKLGGRNLYLVGMMGSGKSRTGPVLAKKLSYGFVDVDDVIEKVTNQSISEIFDQEGEIGFREIETQILQEIGQRHSLVVATGGGIVTRPENWGILHQGVVIWIDLDREIALSRLRSDETPRPLLQKNLDDNFDCLFKERLPIYLESDVHLSVREESPDDVAIGICTNLQLLLLKDEGLDGRQTIEE.

ATP is bound at residue 26–31 (GSGKSR). Serine 30 serves as a coordination point for Mg(2+). 3 residues coordinate substrate: aspartate 48, arginine 72, and glycine 94. Residue arginine 132 coordinates ATP. Arginine 150 serves as a coordination point for substrate.

It belongs to the shikimate kinase family. As to quaternary structure, monomer. Mg(2+) serves as cofactor.

The protein localises to the cytoplasm. The enzyme catalyses shikimate + ATP = 3-phosphoshikimate + ADP + H(+). It participates in metabolic intermediate biosynthesis; chorismate biosynthesis; chorismate from D-erythrose 4-phosphate and phosphoenolpyruvate: step 5/7. Functionally, catalyzes the specific phosphorylation of the 3-hydroxyl group of shikimic acid using ATP as a cosubstrate. The polypeptide is Shikimate kinase (Prochlorococcus marinus (strain MIT 9211)).